We begin with the raw amino-acid sequence, 293 residues long: Phosphate import ATP-binding protein PstB (293 aa).

In terms of domain architecture, ABC transporter spans 46–288 (MTCRKVDVHY…PGHQLTEDYI (243 aa)). Residue 78 to 85 (GPSGCGKS) coordinates ATP.

Belongs to the ABC transporter superfamily. Phosphate importer (TC 3.A.1.7) family. As to quaternary structure, the complex is composed of two ATP-binding proteins (PstB), two transmembrane proteins (PstC and PstA) and a solute-binding protein (PstS).

The protein localises to the cell inner membrane. It carries out the reaction phosphate(out) + ATP + H2O = ADP + 2 phosphate(in) + H(+). Part of the ABC transporter complex PstSACB involved in phosphate import. Responsible for energy coupling to the transport system. In Desulfotalea psychrophila (strain LSv54 / DSM 12343), this protein is Phosphate import ATP-binding protein PstB.